The following is a 977-amino-acid chain: MRLPLPSDLPATLQPLVTRNQQFISDAVAGHPELDLQAWSPLHRQQFDQVAAASEFVLSLAQREPAMLFALLASGELERRYAPGELRGQIAATAQAAQSEDELARNLRRARNRQQLRIIWRDITRQAELGETCRDLSDLADAAIDEAYQWLYPRHCQQFGTPIGNRSGQPQHMVVLGMGKLGAVELNLSSDIDLIFGFPEGGETEGVKRSLDNQEFFTRLGQRLIKALDPVTVDGFVFRVDMRLRPYGSAGALVLSFNALEQYYQDQGRDWERYAMIKARVVAGDQAAGAQLQEMLRPFVYRRYLDFSAIEALRTMKQLIQQEVRRKGMAENIKLGAGGIREVEFIAQAFQLIHGGRDLSLQQRPLLKVLATLEGQGYLPPAVVAELREGYEFLRYTEHAIQAIADRQTQMLPEGETDQARVAYVLGFADWQSFHDQLMYWRGRIDWHFRQVIADPDDEDGEGELVVGGEWSPLWEQAQDEEAAGRQLQEAGFKQPAEALRRLAGLRSSPQLRSMQRIGRERLDAFIPRLLAQAVEHDNPDLVLERVLPLVEAVARRSAYLVLLTENPGALRRLLTLCAASPWIAEQIALYPLLLDELLNEGRLFSPPLAPELASELRERLTRIPEDDLEQQMEALRHFKLAHSLRVAASEISGNLPLMKVSDYLTWLAEAILDQVLALAWRQTVARHGQPKRSDGSLCDPGFIIIGYGKMGGLELGHGSDLDLVFIHDGDPQAETDGAKPIDSAQFFTRLGQRIIHLLTTQTNSGQLYDVDMRLRPSGASGLLVSSLGAFERYQQNEAWTWEHQALVRARVLVGCKQVGAAFEGVRAKVLGQARDLEKLRGEVSEMRAKMRDNLGTKATAAGTAANAFDAGVPFDIKQDAGGIVDIEFMVQYAALAWSHDHPAILRWTDNIRILEELEQANLMPASDAVLLREVYKAFRSASHRQALQKEAGVIDAAQFADERREVRRIWGELGLS.

The interval 1 to 457 (MRLPLPSDLP…HFRQVIADPD (457 aa)) is adenylyl removase. Residues 468 to 977 (GGEWSPLWEQ…RRIWGELGLS (510 aa)) are adenylyl transferase.

It belongs to the GlnE family. Mg(2+) is required as a cofactor.

It catalyses the reaction [glutamine synthetase]-O(4)-(5'-adenylyl)-L-tyrosine + phosphate = [glutamine synthetase]-L-tyrosine + ADP. The enzyme catalyses [glutamine synthetase]-L-tyrosine + ATP = [glutamine synthetase]-O(4)-(5'-adenylyl)-L-tyrosine + diphosphate. Functionally, involved in the regulation of glutamine synthetase GlnA, a key enzyme in the process to assimilate ammonia. When cellular nitrogen levels are high, the C-terminal adenylyl transferase (AT) inactivates GlnA by covalent transfer of an adenylyl group from ATP to specific tyrosine residue of GlnA, thus reducing its activity. Conversely, when nitrogen levels are low, the N-terminal adenylyl removase (AR) activates GlnA by removing the adenylyl group by phosphorolysis, increasing its activity. The regulatory region of GlnE binds the signal transduction protein PII (GlnB) which indicates the nitrogen status of the cell. This is Bifunctional glutamine synthetase adenylyltransferase/adenylyl-removing enzyme from Pseudomonas putida (strain ATCC 47054 / DSM 6125 / CFBP 8728 / NCIMB 11950 / KT2440).